The sequence spans 298 residues: Beta-1,3-galactosyltransferase 5 (298 aa).

Topologically, residues methionine 1 to arginine 7 are cytoplasmic. Residues leucine 8–leucine 28 traverse the membrane as a helical; Signal-anchor for type II membrane protein segment. Residues asparagine 29–alanine 298 lie on the Lumenal side of the membrane. N-linked (GlcNAc...) asparagine glycans are attached at residues asparagine 130, asparagine 174, and asparagine 231.

Belongs to the glycosyltransferase 31 family.

It is found in the golgi apparatus membrane. It catalyses the reaction a globoside Gb4Cer (d18:1(4E)) + UDP-alpha-D-galactose = a globoside GalGb4Cer (d18:1(4E)) + UDP + H(+). Its pathway is protein modification; protein glycosylation. In terms of biological role, catalyzes the transfer of Gal to GlcNAc-based acceptors with a preference for the core3 O-linked glycan GlcNAc(beta1,3)GalNAc structure. Can use glycolipid LC3Cer as an efficient acceptor. This Gorilla gorilla gorilla (Western lowland gorilla) protein is Beta-1,3-galactosyltransferase 5 (B3GALT5).